Reading from the N-terminus, the 498-residue chain is WD repeat-containing protein 55 homolog (498 aa).

A disordered region spans residues 1 to 131 (MHTHNNFKTP…ATFDLDEDDE (131 aa)). Composition is skewed to acidic residues over residues 12–23 (DEDELDDLDEDM) and 31–48 (IEQE…EYDL). Composition is skewed to low complexity over residues 67–82 (NDSS…NAAD) and 93–103 (AGGVTAGGATS). 6 WD repeats span residues 154–193 (KLED…NKLL), 198–237 (VHSK…LKKL), 241–279 (AHDD…AIFE), 282–321 (ELED…MYVQ), 324–363 (PYEE…YHCD), and 408–447 (QHNM…DFGD). Residues 478 to 498 (DLTKENADGDDDPGAGPSNMA) are disordered.

This sequence belongs to the WD repeat WDR55 family.

The sequence is that of WD repeat-containing protein 55 homolog from Drosophila melanogaster (Fruit fly).